Consider the following 546-residue polypeptide: Interleukin-20 receptor subunit alpha (546 aa).

Positions 1–32 (MHTPGTPAPGHPDPPPLLLLTLLLLLAASGRA) are cleaved as a signal peptide. Over 33–253 (VPCVFCGLPK…EVQTSAWKAK (221 aa)) the chain is Extracellular. Fibronectin type-III domains lie at 42–138 (KPTN…FLET) and 139–245 (QVSP…TLEV). N-linked (GlcNAc...) asparagine glycosylation is found at Asn45, Asn86, Asn94, Asn185, and Asn203. A disulfide bridge links Cys90 with Cys98. Cys218 and Cys239 are oxidised to a cystine. Residues 254–274 (VIFWYVFLTSVIVFLFSAIGY) form a helical membrane-spanning segment. Topologically, residues 275–546 (LVYRYIHVGK…EWGLHVQMES (272 aa)) are cytoplasmic.

It belongs to the type II cytokine receptor family. As to quaternary structure, heterodimer with IL20RB and heterodimer with IL10RB.

Its subcellular location is the membrane. In terms of biological role, the IL20RA/IL20RB dimer is a receptor for IL19, IL20 and IL24. The IL20RA/IL10RB dimer is a receptor for IL26. The chain is Interleukin-20 receptor subunit alpha (Il20ra) from Mus musculus (Mouse).